A 316-amino-acid polypeptide reads, in one-letter code: Protein U25 (316 aa).

The protein belongs to the herpesviridae US22 family.

The polypeptide is Protein U25 (U25) (Homo sapiens (Human)).